The sequence spans 178 residues: Glutamyl-tRNA(Gln) amidotransferase subunit C, mitochondrial (178 aa).

A mitochondrion-targeting transit peptide spans Met-1–Val-31. The tract at residues Ser-26–Gln-67 is disordered. The segment covering Ser-37–Lys-46 has biased composition (basic and acidic residues).

This sequence belongs to the GatC family. As to quaternary structure, subunit of the heterotrimeric GatCAB amidotransferase (AdT) complex, composed of A, B and C subunits.

The protein resides in the mitochondrion. It catalyses the reaction L-glutamyl-tRNA(Gln) + L-glutamine + ATP + H2O = L-glutaminyl-tRNA(Gln) + L-glutamate + ADP + phosphate + H(+). Its function is as follows. Allows the formation of correctly charged Gln-tRNA(Gln) through the transamidation of misacylated Glu-tRNA(Gln) in the mitochondria. The reaction takes place in the presence of glutamine and ATP through an activated gamma-phospho-Glu-tRNA(Gln). This is Glutamyl-tRNA(Gln) amidotransferase subunit C, mitochondrial from Aedes aegypti (Yellowfever mosquito).